Reading from the N-terminus, the 359-residue chain is DNA polymerase IV (359 aa).

Residues 4–185 form the UmuC domain; the sequence is IIHIDMDCYF…LSLRKIPGVG (182 aa). Positions 8 and 103 each coordinate Mg(2+). The active site involves Glu104.

Belongs to the DNA polymerase type-Y family. In terms of assembly, monomer. Mg(2+) is required as a cofactor.

The protein resides in the cytoplasm. It catalyses the reaction DNA(n) + a 2'-deoxyribonucleoside 5'-triphosphate = DNA(n+1) + diphosphate. In terms of biological role, poorly processive, error-prone DNA polymerase involved in untargeted mutagenesis. Copies undamaged DNA at stalled replication forks, which arise in vivo from mismatched or misaligned primer ends. These misaligned primers can be extended by PolIV. Exhibits no 3'-5' exonuclease (proofreading) activity. May be involved in translesional synthesis, in conjunction with the beta clamp from PolIII. This is DNA polymerase IV from Shewanella sp. (strain MR-7).